The following is a 173-amino-acid chain: Small ribosomal subunit protein uS5 (173 aa).

The S5 DRBM domain occupies 17-80 (LREKMIAVNR…EEARRNMVKV (64 aa)).

This sequence belongs to the universal ribosomal protein uS5 family. In terms of assembly, part of the 30S ribosomal subunit. Contacts proteins S4 and S8.

Functionally, with S4 and S12 plays an important role in translational accuracy. In terms of biological role, located at the back of the 30S subunit body where it stabilizes the conformation of the head with respect to the body. The chain is Small ribosomal subunit protein uS5 from Acidovorax sp. (strain JS42).